A 1141-amino-acid polypeptide reads, in one-letter code: Myosin-binding protein C, slow-type (1141 aa).

A compositionally biased stretch (basic and acidic residues) spans 1 to 10 (MPEPTKKEEN). The tract at residues 1–51 (MPEPTKKEENEVPAPAPPPEEPSKEKEAGTTPAKDWTLVETPPGEEQAKQN) is disordered. 5 consecutive Ig-like C2-type domains span residues 72–144 (GEDI…RCEV), 251–340 (SAAF…VREP), 341–431 (PIMV…VDLK), 432–520 (PLKI…HVID), and 522–619 (PKII…VVDF). Thr406 carries the post-translational modification Phosphothreonine. Ser611 carries the phosphoserine modification. 2 consecutive Fibronectin type-III domains span residues 622 to 721 (PPVA…TSPP) and 722 to 833 (TLLT…VKEI). Phosphothreonine is present on Thr798. Position 823 is a phosphotyrosine (Tyr823). An Ig-like C2-type 6 domain is found at 837–931 (PKIRIPRHLK…ASIDIQIIDR (95 aa)). A Fibronectin type-III 3 domain is found at 934–1029 (PPQIVKIEDV…TKESAVIARD (96 aa)). Residues 1047–1141 (PMFTQPLVNT…CKLEVKVIAQ (95 aa)) form the Ig-like C2-type 7 domain.

It belongs to the immunoglobulin superfamily. MyBP family. Interacts with USP25 (isoform USP25m only); the interaction prevents proteasomal degradation of MYBPC1.

In terms of biological role, thick filament-associated protein located in the crossbridge region of vertebrate striated muscle a bands. Slow skeletal protein that binds to both myosin and actin. In vitro, binds to native thin filaments and modifies the activity of actin-activated myosin ATPase. May modulate muscle contraction or may play a more structural role. The chain is Myosin-binding protein C, slow-type (MYBPC1) from Homo sapiens (Human).